Consider the following 911-residue polypeptide: Alpha-actinin-4 (911 aa).

The segment at 1-269 is actin-binding; sequence MVDYHAANQA…YVSSFYHAFS (269 aa). Residues 12-26 form an interaction with VCL region; that stretch reads QYGPSSGGNGTGGGG. The disordered stretch occupies residues 12 to 31; the sequence is QYGPSSGGNGTGGGGGMGDY. The segment covering 16–29 has biased composition (gly residues); that stretch reads SSGGNGTGGGGGMG. At tyrosine 31 the chain carries Phosphotyrosine. The segment at 40-61 is interaction with VCL; the sequence is RDLLLDPAWEKQQRKTFTAWCN. Calponin-homology (CH) domains follow at residues 50-154 and 163-269; these read KQQR…LRFA and TSAK…HAFS. The LXXLL motif signature appears at 84–88; sequence LMLLL. The tract at residues 108–126 is interaction with VCL; it reads KINNVNKALDFIASKGVKL. Residue lysine 114 is modified to N6-acetyllysine. The segment at 177 to 192 is polyphosphoinositide (PIP2)-binding; it reads TAPYKNVNVQNFHISW. N6-acetyllysine is present on lysine 214. Residue threonine 249 is modified to Phosphothreonine. Spectrin repeat units lie at residues 293-403, 413-518, 528-639, and 649-752; these read HLME…WLLN, HLAE…ALEK, QLHL…ALLE, and HLRR…EVEN. N6-acetyllysine occurs at positions 592 and 625. Serine 696 bears the Phosphoserine mark. The mediates interaction with MICALL2 stretch occupies residues 736 to 911; that stretch reads WEQLLTTIAR…STALYGESDL (176 aa). EF-hand domains lie at 765–800 and 806–841; these read EQMQ…LGYD and QGDA…ETTD. Aspartate 778 provides a ligand contact to Ca(2+). Lysine 779 is modified (N6-acetyllysine). Ca(2+) contacts are provided by aspartate 780 and glutamate 789. At lysine 859 the chain carries N6-acetyllysine. At serine 909 the chain carries Phosphoserine.

It belongs to the alpha-actinin family. In terms of assembly, homodimer; antiparallel. Interacts with MAGI1. Interacts with MICALL2 (preferentially in opened conformation); stimulated by RAB13 activation. Identified in a IGF2BP1-dependent mRNP granule complex containing untranslated mRNAs. Component of the CART complex, at least composed of ACTN4, HGS/HRS, MYO5B and TRIM3. Binds TRIM3 at the N-terminus. Interacts with PDLIM2. Identified in a complex with CASK, IQGAP1, MAGI2, NPHS1, SPTAN1 and SPTBN1. Interacts with PPARG and RARA. Binds to VCL; this interaction triggers VCL conformational changes. Interacts with SEPTIN14. Interacts with IGSF8. In terms of tissue distribution, expressed in the foot process layer of podocytes in the kidney glomerulus but not in tubules (at protein level).

It localises to the nucleus. The protein resides in the cytoplasm. The protein localises to the cell junction. It is found in the cytoskeleton. Its subcellular location is the stress fiber. It localises to the perinuclear region. Functionally, F-actin cross-linking protein which is thought to anchor actin to a variety of intracellular structures. This is a bundling protein. Probably involved in vesicular trafficking via its association with the CART complex. The CART complex is necessary for efficient transferrin receptor recycling but not for EGFR degradation. Involved in tight junction assembly in epithelial cells probably through interaction with MICALL2. Links MICALL2 to the actin cytoskeleton and recruits it to the tight junctions. May also function as a transcriptional coactivator, stimulating transcription mediated by the nuclear hormone receptors PPARG and RARA. Association with IGSF8 regulates the immune synapse formation and is required for efficient T-cell activation. This is Alpha-actinin-4 from Rattus norvegicus (Rat).